An 88-amino-acid chain; its full sequence is MQEFALSLLVLLAGLPTLDANDPEDKDSPFYYDWHSLRVGGLICAGILCALGIIVLMSGKCKCKFSQKPSHRPGDGPPLITPGSAHNC.

Residues 1–20 (MQEFALSLLVLLAGLPTLDA) form the signal peptide. The Extracellular segment spans residues 21–38 (NDPEDKDSPFYYDWHSLR). Residues 39–59 (VGGLICAGILCALGIIVLMSG) traverse the membrane as a helical segment. At 60–88 (KCKCKFSQKPSHRPGDGPPLITPGSAHNC) the chain is on the cytoplasmic side. Residues 66-88 (SQKPSHRPGDGPPLITPGSAHNC) form a disordered region.

The protein belongs to the FXYD family. In terms of assembly, regulatory subunit of the sodium/potassium-transporting ATPase which is composed of a catalytic alpha subunit, a non-catalytic beta subunit and an additional regulatory subunit. Interacts with catalytic alpha subunit ATP1A1. Also interacts with non-catalytic beta subunit ATP1B1. Interacts with the alpha1-beta1, alpha2-beta1 and alpha3-beta1 NKA isozymes. Post-translationally, glutathionylated.

It is found in the cell membrane. Functionally, associates with and regulates the activity of the sodium/potassium-transporting ATPase (NKA) which transports Na(+) out of the cell and K(+) into the cell. Reduces glutathionylation of the NKA beta-1 subunit ATP1B1, thus reversing glutathionylation-mediated inhibition of ATP1B1. Induces a hyperpolarization-activated chloride current when expressed in Xenopus oocytes. The protein is FXYD domain-containing ion transport regulator 3 (Fxyd3) of Rattus norvegicus (Rat).